The primary structure comprises 428 residues: MKNIVFCGLSSRAFSMFIKPLMERFSTHYEITGLLDADPKRFAVCKKKFPELAHVPEFSEDAFDEMMRVSKPDIVIVAGRDDTHVAYIVKSLQWNTDVITEKPMVTTVQDANRVLEAEAKSEGKVTVAFNYRYSPFHRKIKEMILDGKIGRVTSVDLNWYIDTYHGASYFKRWNRSRQFSGGLSVHKSTHHFDLVNWWLGQNPEEVFAYGALNYYGPDSEWNPLPEEDGRFCGTCRVKEKCHYYSRWHPRSSKASIKDDHLEAGDQSSLYTAYRPDACIFDEEIDIEDTYVAAVKYDGGALLSYSIIFSAPYEGYRLTINGTKGRIESNEFHEPSRIPFAFPEQTIEYYPLFESKQTIQVVKNEGGHGGGDPLLLEDLFLGKDPLRRYDILAGAEAGAYSIAVGEGMWRSVAEKKPIGMKELFQMQNV.

The N-terminal stretch at 1-23 is a signal peptide; it reads MKNIVFCGLSSRAFSMFIKPLME.

The protein belongs to the Gfo/Idh/MocA family.

Functionally, may play a role in the degradation of type I rhamnogalacturonan derived from plant cell walls. This Bacillus subtilis (strain 168) protein is Putative oxidoreductase YteT (yteT).